The sequence spans 244 residues: Globin-like protein 9 (244 aa).

Residues 1–38 (MRRMAKYDRSYSMQDAHGPNGLARRGTQRGCSRSKSTR) are disordered. The Globin domain maps to 47 to 200 (SLTFSQKQAL…LIDELRGGFE (154 aa)). Residues His-111 and His-143 each contribute to the heme site.

Belongs to the globin family.

The polypeptide is Globin-like protein 9 (Caenorhabditis briggsae).